Reading from the N-terminus, the 166-residue chain is MPLSNGRNRRTRKLFKRPFRGHGLSNTSTILHTYKVGDYVTILCNSSIQHGLPYKAFHGKTGRVWNVNPHAIGVMVNKKVNNRIVVKRLHISPEHIRPSGCQKDFLERKAAVAAIRKQNIQLKKEGKPLLPLPAKRLPKQPRPAELIKGADIKFTTVAPLKFEELY.

The protein belongs to the eukaryotic ribosomal protein eL21 family. Component of the large ribosomal subunit.

The protein localises to the cytoplasm. It is found in the cytosol. It localises to the endoplasmic reticulum. Component of the large ribosomal subunit. The ribosome is a large ribonucleoprotein complex responsible for the synthesis of proteins in the cell. This chain is Large ribosomal subunit protein eL21 (RPL21), found in Entamoeba histolytica (strain ATCC 30459 / HM-1:IMSS / ABRM).